A 185-amino-acid chain; its full sequence is Elongation factor P (185 aa).

It belongs to the elongation factor P family.

It is found in the cytoplasm. It participates in protein biosynthesis; polypeptide chain elongation. Its function is as follows. Involved in peptide bond synthesis. Stimulates efficient translation and peptide-bond synthesis on native or reconstituted 70S ribosomes in vitro. Probably functions indirectly by altering the affinity of the ribosome for aminoacyl-tRNA, thus increasing their reactivity as acceptors for peptidyl transferase. This is Elongation factor P from Symbiobacterium thermophilum (strain DSM 24528 / JCM 14929 / IAM 14863 / T).